The sequence spans 1273 residues: Inverted formin-2 (1273 aa).

Disordered stretches follow at residues 1–30 (MSVK…EANL), 346–387 (GRPR…GQQP), 427–559 (LSSS…PLPG), 960–999 (NKDR…GPGK), and 1021–1273 (KTAR…CVIQ). Serine 2 is modified (N-acetylserine). The region spanning 2–330 (SVKEGAQRKW…RAVLLASDAQ (329 aa)) is the GBD/FH3 domain. Serine 351 is modified (phosphoserine). Over residues 359–382 (SVQTNSVQNQGSSSQNTTTPTTKV) the composition is skewed to low complexity. The 144-residue stretch at 421 to 564 (PLPTPPLSSS…PPLPGFSVPS (144 aa)) folds into the FH1 domain. Pro residues-rich tracts occupy residues 433-516 (VLPP…PLPS) and 524-558 (QPPP…PPLP). An FH2 domain is found at 589–979 (HRRVNPPTLR…AERRKQQLAE (391 aa)). Positions 907 to 984 (EASQELDKVF…QQLAEEEARR (78 aa)) form a coiled coil. Residues 1007-1022 (DALLADIRKGFQLRKT) enclose the WH2 domain. Over residues 1047-1059 (ATASNPTQGTNHP) the composition is skewed to polar residues. The span at 1088–1101 (SKEEDGPPALERRS) shows a compositional bias: basic and acidic residues. Phosphoserine is present on residues serine 1172 and serine 1174. Over residues 1195–1204 (GEDEDGEDTA) the composition is skewed to acidic residues. Position 1203 is a phosphothreonine (threonine 1203). 2 positions are modified to phosphoserine: serine 1216 and serine 1218. Residues threonine 1223 and threonine 1230 each carry the phosphothreonine modification. Basic residues predominate over residues 1242–1251 (TSKRRKKRPS).

It belongs to the formin homology family. In terms of assembly, interacts with profilin and actin at the FH1 and FH2 domains respectively. Interacts with DAAM2.

The protein resides in the cytoplasm. It localises to the perinuclear region. Phosphate inhibits both the depolymerization and severing activities. In terms of biological role, severs actin filaments and accelerates their polymerization and depolymerization. The protein is Inverted formin-2 (Inf2) of Mus musculus (Mouse).